Here is a 266-residue protein sequence, read N- to C-terminus: Protein-ADP-ribose hydrolase (266 aa).

Residues 74 to 265 (TDLKDLKPIK…LYKEAFNRDA (192 aa)) form the Macro domain. 3 residues coordinate ADP-D-ribose: Asp93, Ile94, and Asn107. Positions 113, 118, and 120 each coordinate Zn(2+). ADP-D-ribose-binding residues include Cys120, Ile121, Asp122, Ser212, Thr213, Gly214, and Phe216.

The protein belongs to the MacroD-type family. Zn-Macro subfamily. Zn(2+) is required as a cofactor.

It catalyses the reaction 4-O-(ADP-D-ribosyl)-L-aspartyl-[protein] + H2O = L-aspartyl-[protein] + ADP-D-ribose + H(+). Its function is as follows. ADP-ribosylhydrolase that specifically reverses the SirTM-mediated mono-ADP-ribosylation at an asparatate residue of GcvH-L, by releasing ADP-ribose from the target protein. May play a role in the regulation of the response to host-induced oxidative stress. The sequence is that of Protein-ADP-ribose hydrolase from Staphylococcus aureus (strain MRSA252).